We begin with the raw amino-acid sequence, 421 residues long: Testin (421 aa).

The PET domain maps to 92–199; it reads MILTNPVAAK…GDVKLPCEMD (108 aa). The interval 133–164 is disordered; it reads EKQPVAGSEGAQYRKKQLAKQLPAHDQDPSKC. Basic and acidic residues predominate over residues 155 to 164; it reads PAHDQDPSKC. LIM zinc-binding domains are found at residues 234–297, 299–359, and 362–421; these read YSCY…CDSE, PRCA…NHAV, and QGCH…KMMS.

Belongs to the prickle / espinas / testin family. In terms of assembly, interacts via LIM domain 1 with ZYX. Interacts (via LIM domain 3) with ENAH and VASP. Interacts with ALKBH4, talin, actin, alpha-actinin, GRIP1 and PXN. Interacts (via LIM domain 2) with ACTL7A (via N-terminus). Heterodimer with ACTL7A; the heterodimer interacts with ENAH to form a heterotrimer.

It localises to the cytoplasm. It is found in the cell junction. Its subcellular location is the focal adhesion. Functionally, scaffold protein that may play a role in cell adhesion, cell spreading and in the reorganization of the actin cytoskeleton. Plays a role in the regulation of cell proliferation. May act as a tumor suppressor. The protein is Testin (TES) of Ateles geoffroyi (Black-handed spider monkey).